Consider the following 248-residue polypeptide: 14-3-3 protein sigma (248 aa).

S5, S74, and S248 each carry phosphoserine.

This sequence belongs to the 14-3-3 family. In terms of assembly, homodimer. Interacts with KRT17 and SAMSN1. Found in a complex with XPO7, EIF4A1, ARHGAP1, VPS26A, VPS29 and VPS35. Interacts with GAB2. Interacts with SRPK2. Interacts with COPS6. Interacts with COP1; this interaction leads to proteasomal degradation. Interacts with the 'Thr-369' phosphorylated form of DAPK2. Interacts with PI4KB. Interacts with SLITRK1. Interacts with LRRK2; this interaction is dependent on LRRK2 phosphorylation. Interacts with PKP3 (via N-terminus); the interaction maintains the cytoplasmic pool of PKP3, facilitates PKP3 exchange at desmosomes and restricts PKP3 localization to existing desmosome cell junctions. Interacts with LCP2. In terms of processing, ubiquitinated. Ubiquitination by RFFL induces proteasomal degradation and indirectly regulates p53/TP53 activation.

The protein resides in the cytoplasm. It localises to the nucleus. Its subcellular location is the secreted. Adapter protein implicated in the regulation of a large spectrum of both general and specialized signaling pathways. Binds to a large number of partners, usually by recognition of a phosphoserine or phosphothreonine motif. Binding generally results in the modulation of the activity of the binding partner. Promotes cytosolic retention of GBP1 GTPase by binding to phosphorylated GBP1, thereby inhibiting the innate immune response. Also acts as a TP53/p53-regulated inhibitor of G2/M progression. When bound to KRT17, regulates protein synthesis and epithelial cell growth by stimulating Akt/mTOR pathway. Acts to maintain desmosome cell junction adhesion in epithelial cells via interacting with and sequestering PKP3 to the cytoplasm, thereby restricting its translocation to existing desmosome structures and therefore maintaining desmosome protein homeostasis. Also acts to facilitate PKP3 exchange at desmosome plaques, thereby maintaining keratinocyte intercellular adhesion. May also regulate MDM2 autoubiquitination and degradation and thereby activate p53/TP53. This chain is 14-3-3 protein sigma (SFN), found in Bos taurus (Bovine).